Here is a 703-residue protein sequence, read N- to C-terminus: Zinc finger protein 750 (703 aa).

A CCHC-type zinc finger spans residues 25–51; it reads YKCFQCPFTCNEKSHLFNHMKYGLCKN. Zn(2+) contacts are provided by cysteine 27, cysteine 30, histidine 43, and cysteine 49. Disordered stretches follow at residues 60 to 96, 121 to 147, 362 to 617, and 633 to 703; these read DRVP…SGLS, GPHR…EAAV, PSKL…EQKQ, and NVEP…TRVS. A compositionally biased stretch (polar residues) spans 67 to 78; sequence KPNSSDPKQTNQ. The span at 79–93 shows a compositional bias: low complexity; the sequence is PDPVVKPTSSKPVPS. Over residues 375-399 the composition is skewed to basic and acidic residues; the sequence is TELEKQSPTPEAKEPSKDGQRDTEG. Over residues 418–428 the composition is skewed to polar residues; the sequence is SPTNFTQTSQP. The span at 583-592 shows a compositional bias: low complexity; it reads SSGDGPDPSS. Residues 605 to 616 show a composition bias toward basic and acidic residues; that stretch reads QDIRAADSDEQK.

It is found in the nucleus. In terms of biological role, transcription factor involved in epidermis differentiation. Required for terminal epidermal differentiation: acts downstream of p63/TP63 and activates expression of late epidermal differentiation genes. Specifically binds to the promoter of KLF4 and promotes its expression. The polypeptide is Zinc finger protein 750 (ZNF750) (Bos taurus (Bovine)).